The chain runs to 355 residues: GTPase Obg (355 aa).

The Obg domain maps to 1-159; sequence MKFLDEAKVY…KTIWLRLKLI (159 aa). The region spanning 160–327 is the OBG-type G domain; it reads ADAGLVGLPN…ALRALRDIIV (168 aa). Residues 166 to 173, 191 to 195, 212 to 215, 279 to 282, and 308 to 310 contribute to the GTP site; these read GLPNAGKS, FTTLH, DIPG, SQID, and SAA. 2 residues coordinate Mg(2+): S173 and T193. Residues 333-355 are disordered; the sequence is GDTALPDRSMPHESEVEEEDDRL.

This sequence belongs to the TRAFAC class OBG-HflX-like GTPase superfamily. OBG GTPase family. In terms of assembly, monomer. The cofactor is Mg(2+).

The protein resides in the cytoplasm. An essential GTPase which binds GTP, GDP and possibly (p)ppGpp with moderate affinity, with high nucleotide exchange rates and a fairly low GTP hydrolysis rate. Plays a role in control of the cell cycle, stress response, ribosome biogenesis and in those bacteria that undergo differentiation, in morphogenesis control. The polypeptide is GTPase Obg (Agrobacterium fabrum (strain C58 / ATCC 33970) (Agrobacterium tumefaciens (strain C58))).